We begin with the raw amino-acid sequence, 401 residues long: 8-amino-7-oxononanoate synthase (401 aa).

Substrate is bound at residue Arg19. A pyridoxal 5'-phosphate-binding site is contributed by 106–107 (GY). His131 lines the substrate pocket. Residues Ser176, His204, and Thr233 each coordinate pyridoxal 5'-phosphate. N6-(pyridoxal phosphate)lysine is present on Lys236. Substrate is bound at residue Thr350.

Belongs to the class-II pyridoxal-phosphate-dependent aminotransferase family. BioF subfamily. In terms of assembly, homodimer. It depends on pyridoxal 5'-phosphate as a cofactor.

The enzyme catalyses 6-carboxyhexanoyl-[ACP] + L-alanine + H(+) = (8S)-8-amino-7-oxononanoate + holo-[ACP] + CO2. It participates in cofactor biosynthesis; biotin biosynthesis. Functionally, catalyzes the decarboxylative condensation of pimeloyl-[acyl-carrier protein] and L-alanine to produce 8-amino-7-oxononanoate (AON), [acyl-carrier protein], and carbon dioxide. This is 8-amino-7-oxononanoate synthase from Pseudomonas aeruginosa (strain ATCC 15692 / DSM 22644 / CIP 104116 / JCM 14847 / LMG 12228 / 1C / PRS 101 / PAO1).